The following is a 437-amino-acid chain: Trigger factor (437 aa).

One can recognise a PPIase FKBP-type domain in the interval 161–246 (GDQVNINFVG…VNSVSEAVLP (86 aa)).

Belongs to the FKBP-type PPIase family. Tig subfamily.

Its subcellular location is the cytoplasm. The catalysed reaction is [protein]-peptidylproline (omega=180) = [protein]-peptidylproline (omega=0). Functionally, involved in protein export. Acts as a chaperone by maintaining the newly synthesized protein in an open conformation. Functions as a peptidyl-prolyl cis-trans isomerase. The polypeptide is Trigger factor (Cellvibrio japonicus (strain Ueda107) (Pseudomonas fluorescens subsp. cellulosa)).